Reading from the N-terminus, the 197-residue chain is Holliday junction branch migration complex subunit RuvA (197 aa).

Positions Met1–Ala65 are domain I. Residues His66–Pro140 form a domain II region. The interval Pro140–Thr144 is flexible linker. The segment at Ala145–Lys197 is domain III.

The protein belongs to the RuvA family. Homotetramer. Forms an RuvA(8)-RuvB(12)-Holliday junction (HJ) complex. HJ DNA is sandwiched between 2 RuvA tetramers; dsDNA enters through RuvA and exits via RuvB. An RuvB hexamer assembles on each DNA strand where it exits the tetramer. Each RuvB hexamer is contacted by two RuvA subunits (via domain III) on 2 adjacent RuvB subunits; this complex drives branch migration. In the full resolvosome a probable DNA-RuvA(4)-RuvB(12)-RuvC(2) complex forms which resolves the HJ.

The protein resides in the cytoplasm. The RuvA-RuvB-RuvC complex processes Holliday junction (HJ) DNA during genetic recombination and DNA repair, while the RuvA-RuvB complex plays an important role in the rescue of blocked DNA replication forks via replication fork reversal (RFR). RuvA specifically binds to HJ cruciform DNA, conferring on it an open structure. The RuvB hexamer acts as an ATP-dependent pump, pulling dsDNA into and through the RuvAB complex. HJ branch migration allows RuvC to scan DNA until it finds its consensus sequence, where it cleaves and resolves the cruciform DNA. The protein is Holliday junction branch migration complex subunit RuvA of Gemmatimonas aurantiaca (strain DSM 14586 / JCM 11422 / NBRC 100505 / T-27).